Reading from the N-terminus, the 101-residue chain is Small ribosomal subunit protein bS18c (101 aa).

Belongs to the bacterial ribosomal protein bS18 family. As to quaternary structure, part of the 30S ribosomal subunit.

Its subcellular location is the plastid. The protein localises to the chloroplast. In Lepidium virginicum (Virginia pepperweed), this protein is Small ribosomal subunit protein bS18c.